Here is a 580-residue protein sequence, read N- to C-terminus: Proline--tRNA ligase (580 aa).

The protein belongs to the class-II aminoacyl-tRNA synthetase family. ProS type 1 subfamily. Homodimer.

It is found in the cytoplasm. It carries out the reaction tRNA(Pro) + L-proline + ATP = L-prolyl-tRNA(Pro) + AMP + diphosphate. Functionally, catalyzes the attachment of proline to tRNA(Pro) in a two-step reaction: proline is first activated by ATP to form Pro-AMP and then transferred to the acceptor end of tRNA(Pro). As ProRS can inadvertently accommodate and process non-cognate amino acids such as alanine and cysteine, to avoid such errors it has two additional distinct editing activities against alanine. One activity is designated as 'pretransfer' editing and involves the tRNA(Pro)-independent hydrolysis of activated Ala-AMP. The other activity is designated 'posttransfer' editing and involves deacylation of mischarged Ala-tRNA(Pro). The misacylated Cys-tRNA(Pro) is not edited by ProRS. The polypeptide is Proline--tRNA ligase (Mycobacteroides abscessus (strain ATCC 19977 / DSM 44196 / CCUG 20993 / CIP 104536 / JCM 13569 / NCTC 13031 / TMC 1543 / L948) (Mycobacterium abscessus)).